A 629-amino-acid chain; its full sequence is Protein SPT2 homolog (629 aa).

Residues 1–522 (MDFDSVLSIA…SGHRILVKPS (522 aa)) form an important for interaction with DNA region. Residues 45 to 72 (QAFLKKKAVEQKNKEQQDKKAKEDLLAK) adopt a coiled-coil conformation. Residues 53–93 (VEQKNKEQQDKKAKEDLLAKRVELKSDRKARAMASRTKDNF) are compositionally biased toward basic and acidic residues. Disordered regions lie at residues 53 to 181 (VEQK…ASSS), 206 to 533 (KTEE…TSSY), and 608 to 629 (EDEE…KKRK). Residues 111–123 (KGSSTEEQQSSTK) show a composition bias toward polar residues. Residues 127 to 144 (GDYDDEDNFDYEGTDSES) show a composition bias toward acidic residues. Residues 203 to 228 (VVKKTEERLRTAEEIRELEMERRVKK) adopt a coiled-coil conformation. Basic and acidic residues-rich tracts occupy residues 206-247 (KTEE…KDSR) and 257-277 (KHVD…EKHQ). 7 stretches are compositionally biased toward polar residues: residues 278–297 (SSST…TPTS), 305–327 (SNSG…SFQA), 335–345 (SQGQRPATPSD), 353–364 (VSLTQAKSSISG), 387–398 (SNFSTSGPSQKP), 437–450 (NLQS…SRAS), and 462–490 (SGSQ…TKNI). An important for interaction with histones region spans residues 523-629 (GPALPPITSS…MQRKNAKKRK (107 aa)). The stretch at 591–629 (WKEQQKEEARSLRMAVLEDEEEERRELEEMQRKNAKKRK) forms a coiled coil.

It belongs to the SPT2 family. Interacts with histones. Interacts with a heterotetrameric complex formed by histone H3 and H4, especially when the histone tetramer is not bound to DNA.

The protein localises to the nucleus. The protein resides in the nucleolus. Histone chaperone that stabilizes pre-existing histone tetramers and regulates replication-independent histone exchange on chromatin. Required for normal chromatin refolding in the coding region of transcribed genes, and for the suppression of spurious transcription. Binds DNA and histones and promotes nucleosome assembly (in vitro). Facilitates formation of tetrameric histone complexes containing histone H3 and H4. Modulates RNA polymerase 1-mediated transcription. Binds DNA, with a preference for branched DNA species, such as Y-form DNA and Holliday junction DNA. In Danio rerio (Zebrafish), this protein is Protein SPT2 homolog (spty2d1).